Reading from the N-terminus, the 250-residue chain is Proteasome subunit alpha (250 aa).

This sequence belongs to the peptidase T1A family. In terms of assembly, the 20S proteasome core is composed of 14 alpha and 14 beta subunits that assemble into four stacked heptameric rings, resulting in a barrel-shaped structure. The two inner rings, each composed of seven catalytic beta subunits, are sandwiched by two outer rings, each composed of seven alpha subunits. The catalytic chamber with the active sites is on the inside of the barrel. Has a gated structure, the ends of the cylinder being occluded by the N-termini of the alpha-subunits. Is capped by the proteasome-associated ATPase, ARC.

It localises to the cytoplasm. It functions in the pathway protein degradation; proteasomal Pup-dependent pathway. With respect to regulation, the formation of the proteasomal ATPase ARC-20S proteasome complex, likely via the docking of the C-termini of ARC into the intersubunit pockets in the alpha-rings, may trigger opening of the gate for substrate entry. Interconversion between the open-gate and close-gate conformations leads to a dynamic regulation of the 20S proteasome proteolysis activity. Functionally, component of the proteasome core, a large protease complex with broad specificity involved in protein degradation. The chain is Proteasome subunit alpha from Mycobacterium sp. (strain JLS).